An 863-amino-acid polypeptide reads, in one-letter code: Leucine--tRNA ligase (863 aa).

Residues 42-52 carry the 'HIGH' region motif; that stretch reads PYPSGKIHMGH. The short motif at 618 to 622 is the 'KMSKS' region element; that stretch reads KMSKS. Position 621 (lysine 621) interacts with ATP.

Belongs to the class-I aminoacyl-tRNA synthetase family.

It localises to the cytoplasm. It carries out the reaction tRNA(Leu) + L-leucine + ATP = L-leucyl-tRNA(Leu) + AMP + diphosphate. The chain is Leucine--tRNA ligase from Desulforapulum autotrophicum (strain ATCC 43914 / DSM 3382 / VKM B-1955 / HRM2) (Desulfobacterium autotrophicum).